We begin with the raw amino-acid sequence, 200 residues long: Somatotropin (200 aa).

A signal peptide spans 1-22; the sequence is MARVLVVLSVVVASLFFSQGAT. Residue H38 participates in Zn(2+) binding. C71 and C173 are joined by a disulfide. Residue E182 coordinates Zn(2+). C190 and C198 are joined by a disulfide.

This sequence belongs to the somatotropin/prolactin family.

Its subcellular location is the secreted. Growth hormone plays an important role in growth control and is involved in the regulation of several anabolic processes. Implicated as an osmoregulatory substance important for seawater adaptation. In Pangasianodon gigas (Mekong giant catfish), this protein is Somatotropin (gh).